A 311-amino-acid chain; its full sequence is Tricarboxylate transport protein, mitochondrial (311 aa).

Residues 1 to 13 constitute a propeptide, removed in mature form; the sequence is MAAPRGPRALSAA. Positions 1–21 are disordered; it reads MAAPRGPRALSAAAPGSGKPK. 3 Solcar repeats span residues 23 to 111, 122 to 208, and 218 to 303; these read THPG…LSNH, RRGL…LRNW, and MNPL…VVKL. Helical transmembrane passes span 29–46, 86–105, and 129–143; these read ILAG…TFPT, GLSS…FGMF, and LGAG…VCPM. Serine 156 bears the Phosphoserine mark. Helical transmembrane passes span 183 to 202, 224 to 241, and 278 to 297; these read GLTA…FFVM, GVFG…NTPL, and GTVP…FIIY.

It belongs to the mitochondrial carrier (TC 2.A.29) family. Possesses a short cleavable presequence, which, however, is found to be dispensable both for targeting to mitochondria and insertion into the inner membrane. However, the presequence is required to keep SLC25A1 in a soluble state and thus in an import-competent state. Mature SLC25A1 lacking the presequence is prone to aggregation. In terms of tissue distribution, expressed minimally but ubiquitously throughout the adult brain. Detected at higher levels in the olfactory bulb, neocortex and cerebellum. Also expressed in a subset of large cells in the globus pallidus.

Its subcellular location is the mitochondrion inner membrane. It is found in the mitochondrion membrane. The enzyme catalyses (S)-malate(in) + citrate(out) = (S)-malate(out) + citrate(in). The catalysed reaction is D-threo-isocitrate(in) + citrate(out) = D-threo-isocitrate(out) + citrate(in). It catalyses the reaction citrate(out) + succinate(in) = citrate(in) + succinate(out). It carries out the reaction cis-aconitate(in) + citrate(out) = cis-aconitate(out) + citrate(in). The enzyme catalyses trans-aconitate(in) + citrate(out) = trans-aconitate(out) + citrate(in). The catalysed reaction is phosphoenolpyruvate(in) + citrate(out) = phosphoenolpyruvate(out) + citrate(in). It catalyses the reaction maleate(in) + citrate(out) = maleate(out) + citrate(in). Mitochondrial electroneutral antiporter that exports citrate from the mitochondria into the cytosol in exchange for malate. Also able to mediate the exchange of citrate for isocitrate, phosphoenolpyruvate, cis-aconitate and to a lesser extent trans-aconitate, maleate and succinate. In the cytoplasm, citrate plays important roles in fatty acid and sterol synthesis, regulation of glycolysis, protein acetylation, and other physiopathological processes. In Mus musculus (Mouse), this protein is Tricarboxylate transport protein, mitochondrial.